The primary structure comprises 245 residues: Putative outer membrane protein RBE_0022 (245 aa).

The first 23 residues, 1-23, serve as a signal peptide directing secretion; it reads MIRMSKRLGVILFVSCISINSFA.

This sequence belongs to the OmpW/AlkL family.

The protein resides in the cell outer membrane. This chain is Putative outer membrane protein RBE_0022, found in Rickettsia bellii (strain RML369-C).